A 695-amino-acid polypeptide reads, in one-letter code: Nucleoprotein (695 aa).

2 coiled-coil regions span residues 316-341 (VNVG…RRHE) and 372-399 (QTLA…VEDQ). The disordered stretch occupies residues 424 to 611 (QARPMNRPTA…SPSAPQEDTR (188 aa)). Basic and acidic residues predominate over residues 438–447 (VDDKIEHEST). Composition is skewed to polar residues over residues 495–505 (RQSQDLNNSQG) and 537–552 (TTDS…SDNE). The PTAP/PSAP motif signature appears at 603-606 (PSAP).

This sequence belongs to the filoviruses nucleoprotein family. In terms of assembly, homooligomer. Homomultimerizes to form the nucleocapsid. Binds to viral genomic RNA. Interacts with VP35 and VP30 to form the nucleocapsid. Also interacts with VP24 and VP40. In terms of processing, phosphorylated.

It is found in the virion. The protein resides in the host cytoplasm. Functionally, encapsidates the genome, protecting it from nucleases. The encapsidated genomic RNA is termed the nucleocapsid and serves as template for transcription and replication. During replication, encapsidation by NP is coupled to RNA synthesis and all replicative products are resistant to nucleases. This chain is Nucleoprotein (NP), found in Chlorocebus aethiops (Green monkey).